The sequence spans 194 residues: Probable GTP-binding protein EngB (194 aa).

Residues 23–194 (DKMEFAFVGR…LNFMEEKLNN (172 aa)) form the EngB-type G domain. Residues 31–38 (GRSNVGKS), 58–62 (GRTQL), 76–79 (DLPG), 142–145 (TKID), and 173–175 (HSS) each bind GTP. Ser38 and Thr60 together coordinate Mg(2+).

Belongs to the TRAFAC class TrmE-Era-EngA-EngB-Septin-like GTPase superfamily. EngB GTPase family. Mg(2+) is required as a cofactor.

In terms of biological role, necessary for normal cell division and for the maintenance of normal septation. In Fusobacterium nucleatum subsp. nucleatum (strain ATCC 25586 / DSM 15643 / BCRC 10681 / CIP 101130 / JCM 8532 / KCTC 2640 / LMG 13131 / VPI 4355), this protein is Probable GTP-binding protein EngB.